Here is a 124-residue protein sequence, read N- to C-terminus: Fluoride-specific ion channel FluC (124 aa).

The next 4 membrane-spanning stretches (helical) occupy residues 1-21 (MFNLLLVVVGGGIGAGIRHLT), 35-55 (WGTMAINIVGSFAMGLFIAIL), 66-86 (LFVATGIFGGFTTFSAFSLDF), and 99-119 (FGYALASVIGAIIALFLGLWL). Na(+) contacts are provided by Gly-74 and Thr-77.

The protein belongs to the fluoride channel Fluc/FEX (TC 1.A.43) family.

Its subcellular location is the cell inner membrane. It carries out the reaction fluoride(in) = fluoride(out). With respect to regulation, na(+) is not transported, but it plays an essential structural role and its presence is essential for fluoride channel function. Its function is as follows. Fluoride-specific ion channel. Important for reducing fluoride concentration in the cell, thus reducing its toxicity. The chain is Fluoride-specific ion channel FluC from Mesorhizobium japonicum (strain LMG 29417 / CECT 9101 / MAFF 303099) (Mesorhizobium loti (strain MAFF 303099)).